The primary structure comprises 444 residues: Vacuolar protein sorting-associated protein 4B (444 aa).

An MIT domain is found at 4–82 (TSPNLQKAID…KEYLKNKEKK (79 aa)). Positions 19-82 (AQEDKAGNYE…KEYLKNKEKK (64 aa)) form a coiled coil. Positions 78–88 (NKEKKAQKPVK) are enriched in basic and acidic residues. The segment at 78–117 (NKEKKAQKPVKEGQPSPADEKGNDSDGEGESDDPEKKKLQ) is disordered. A phosphoserine mark is found at serine 93, serine 102, and serine 108. 174–181 (GPPGTGKS) provides a ligand contact to ATP. The residue at position 410 (serine 410) is a Phosphoserine.

It belongs to the AAA ATPase family. As to quaternary structure, proposed to be monomeric or homodimeric in nucleotide-free form and to oligomerize upon binding to ATP to form two stacked hexameric or heptameric rings with a central pore through which ESCRT-III substrates are translocated in an ATP-dependent manner. In vitro, associates on the inside of a helical tubular structure formed by a CHMP2A-CHMP3 polymer. Interacts with CHMP1A, CHMP1B, CHMP2A, CHMP4B and CHMP6. Interacts with VPS4A; the interaction suggests a heteromeric assembly with VPS4A. Interacts with VTA1.

The protein localises to the late endosome membrane. It catalyses the reaction ATP + H2O = ADP + phosphate + H(+). In terms of biological role, involved in late steps of the endosomal multivesicular bodies (MVB) pathway. Recognizes membrane-associated ESCRT-III assemblies and catalyzes their disassembly, possibly in combination with membrane fission. Redistributes the ESCRT-III components to the cytoplasm for further rounds of MVB sorting. MVBs contain intraluminal vesicles (ILVs) that are generated by invagination and scission from the limiting membrane of the endosome and mostly are delivered to lysosomes enabling degradation of membrane proteins, such as stimulated growth factor receptors, lysosomal enzymes and lipids. VPS4A/B are required for the exosomal release of SDCBP, CD63 and syndecan. Functionally, (Microbial infection) In conjunction with the ESCRT machinery also appears to function in topologically equivalent membrane fission events, such as the terminal stages of cytokinesis and enveloped virus budding (lentiviruses). The polypeptide is Vacuolar protein sorting-associated protein 4B (VPS4B) (Pongo abelii (Sumatran orangutan)).